A 981-amino-acid chain; its full sequence is Ubiquitin carboxyl-terminal hydrolase 15 (981 aa).

Residue alanine 2 is modified to N-acetylalanine. The segment at 2-223 (AEGGAADLDT…KNEDGTWPRG (222 aa)) is mediates interaction with SART3. The region spanning 7 to 118 (ADLDTQRSDI…GQEPIARKVV (112 aa)) is the DUSP domain. The disordered stretch occupies residues 216–237 (EDGTWPRGPSTPKSPGASNFST). Threonine 226 carries the phosphothreonine modification. Residues 226–237 (TPKSPGASNFST) show a composition bias toward polar residues. A phosphoserine mark is found at serine 229 and serine 242. In terms of domain architecture, USP spans 289-933 (CGLSNLGNTC…AAYVLFYQRQ (645 aa)). Cysteine 298 serves as the catalytic Nucleophile. Threonine 602 bears the Phosphothreonine mark. The tract at residues 629 to 694 (GSLHCCKDQN…GGDNDSENGL (66 aa)) is disordered. Over residues 656 to 673 (METDEPDDESSQDQELPS) the composition is skewed to acidic residues. The active-site Proton acceptor is histidine 891. Residues 952-981 (SAATGIPLESDEDSNDNDNDIENENCMHTN) are disordered. The segment covering 960-974 (ESDEDSNDNDNDIEN) has biased composition (acidic residues). Residues serine 961 and serine 965 each carry the phosphoserine modification.

Belongs to the peptidase C19 family. A homodimer structure has been reported; however it is unclear whether the protein form a homodimer in vivo. Identified in a complex with the COP9 signalosome complex (CSN). Interacts with SMAD1, SMAD2 and SMAD3; the interaction is direct. Forms a complex with SMURF2 and SMAD7. Interacts with TGFBR1. Interacts with SART3; the interaction is direct. May interact with RNF20 and RNF40. May interact with PRKN. Interacts with INCA1. As to quaternary structure, (Microbial infection) Interacts with human papillomavirus type 16 protein E6. Post-translationally, phosphorylated. Phosphorylation protects against ubiquitination and subsequent degradation by the proteasome. Ubiquitinated, leading to degradation by the proteasome. In terms of tissue distribution, expressed in skeletal muscle, kidney, heart, placenta, liver, thymus, lung, and ovary, with little or no expression in other tissues.

Its subcellular location is the cytoplasm. The protein resides in the nucleus. It localises to the mitochondrion. The catalysed reaction is Thiol-dependent hydrolysis of ester, thioester, amide, peptide and isopeptide bonds formed by the C-terminal Gly of ubiquitin (a 76-residue protein attached to proteins as an intracellular targeting signal).. Its function is as follows. Hydrolase that removes conjugated ubiquitin from target proteins and regulates various pathways such as the TGF-beta receptor signaling, NF-kappa-B and RNF41/NRDP1-PRKN pathways. Acts as a key regulator of TGF-beta receptor signaling pathway, but the precise mechanism is still unclear: according to a report, acts by promoting deubiquitination of monoubiquitinated R-SMADs (SMAD1, SMAD2 and/or SMAD3), thereby alleviating inhibition of R-SMADs and promoting activation of TGF-beta target genes. According to another reports, regulates the TGF-beta receptor signaling pathway by mediating deubiquitination and stabilization of TGFBR1, leading to an enhanced TGF-beta signal. Able to mediate deubiquitination of monoubiquitinated substrates, 'Lys-27'-, 'Lys-48'- and 'Lys-63'-linked polyubiquitin chains. May also regulate gene expression and/or DNA repair through the deubiquitination of histone H2B. Acts as an inhibitor of mitophagy by counteracting the action of parkin (PRKN): hydrolyzes cleavage of 'Lys-48'- and 'Lys-63'-linked polyubiquitin chains attached by parkin on target proteins such as MFN2, thereby reducing parkin's ability to drive mitophagy. Acts as an associated component of COP9 signalosome complex (CSN) and regulates different pathways via this association: regulates NF-kappa-B by mediating deubiquitination of NFKBIA and deubiquitinates substrates bound to VCP. Involved in endosome organization by mediating deubiquitination of SQSTM1: ubiquitinated SQSTM1 forms a molecular bridge that restrains cognate vesicles in the perinuclear region and its deubiquitination releases target vesicles for fast transport into the cell periphery. Acts as a negative regulator of antifungal immunity by mediating 'Lys-27'-linked deubiquitination of CARD9, thereby inactivating CARD9. In terms of biological role, (Microbial infection) Protects APC and human papillomavirus type 16 protein E6 against degradation via the ubiquitin proteasome pathway. In Homo sapiens (Human), this protein is Ubiquitin carboxyl-terminal hydrolase 15.